A 497-amino-acid chain; its full sequence is Probable cytosol aminopeptidase (497 aa).

K263 and D268 together coordinate Mn(2+). The active site involves K275. Residues D286, D345, and E347 each contribute to the Mn(2+) site. The active site involves R349.

The protein belongs to the peptidase M17 family. Mn(2+) is required as a cofactor.

It localises to the cytoplasm. It carries out the reaction Release of an N-terminal amino acid, Xaa-|-Yaa-, in which Xaa is preferably Leu, but may be other amino acids including Pro although not Arg or Lys, and Yaa may be Pro. Amino acid amides and methyl esters are also readily hydrolyzed, but rates on arylamides are exceedingly low.. It catalyses the reaction Release of an N-terminal amino acid, preferentially leucine, but not glutamic or aspartic acids.. In terms of biological role, presumably involved in the processing and regular turnover of intracellular proteins. Catalyzes the removal of unsubstituted N-terminal amino acids from various peptides. This chain is Probable cytosol aminopeptidase, found in Methylorubrum populi (strain ATCC BAA-705 / NCIMB 13946 / BJ001) (Methylobacterium populi).